The chain runs to 640 residues: Threonine--tRNA ligase (640 aa).

Residues 1-61 (MLVVTLPDGS…DKDSQLAIIT (61 aa)) enclose the TGS domain. A catalytic region spans residues 242 to 533 (DHRRLGKQLD…LIENHTGNMP (292 aa)). Zn(2+) contacts are provided by Cys333, His384, and His510.

Belongs to the class-II aminoacyl-tRNA synthetase family. Homodimer. It depends on Zn(2+) as a cofactor.

Its subcellular location is the cytoplasm. It catalyses the reaction tRNA(Thr) + L-threonine + ATP = L-threonyl-tRNA(Thr) + AMP + diphosphate + H(+). Catalyzes the attachment of threonine to tRNA(Thr) in a two-step reaction: L-threonine is first activated by ATP to form Thr-AMP and then transferred to the acceptor end of tRNA(Thr). Also edits incorrectly charged L-seryl-tRNA(Thr). In Polynucleobacter necessarius subsp. necessarius (strain STIR1), this protein is Threonine--tRNA ligase.